The sequence spans 137 residues: Protein CTLA-2-alpha (137 aa).

The first 27 residues, 1-27 (MMVSICEQKLQHFSAVFLLILCLGMMS), serve as a signal peptide directing secretion. Tandem repeats lie at residues 39-41 (EWK) and 42-44 (EWK). The segment at 39–44 (EWKEWK) is 2 X 3 AA tandem repeats of E-W-K. The tract at residues 114-137 (APDLPEYEDLGKNSYLTPGRAQPE) is disordered.

To the propeptide regions of cysteine proteases.

Its subcellular location is the secreted. Not known, expressed in activated T-cell. The polypeptide is Protein CTLA-2-alpha (Ctla2a) (Mus musculus (Mouse)).